We begin with the raw amino-acid sequence, 365 residues long: Sulfate/thiosulfate import ATP-binding protein CysA (365 aa).

The ABC transporter domain maps to 3–237 (IEIANIKKSF…PATRFVLEFM (235 aa)). 35–42 (GPSGSGKT) serves as a coordination point for ATP.

It belongs to the ABC transporter superfamily. Sulfate/tungstate importer (TC 3.A.1.6) family. In terms of assembly, the complex is composed of two ATP-binding proteins (CysA), two transmembrane proteins (CysT and CysW) and a solute-binding protein (CysP).

It localises to the cell inner membrane. The catalysed reaction is sulfate(out) + ATP + H2O = sulfate(in) + ADP + phosphate + H(+). It carries out the reaction thiosulfate(out) + ATP + H2O = thiosulfate(in) + ADP + phosphate + H(+). Functionally, part of the ABC transporter complex CysAWTP involved in sulfate/thiosulfate import. Responsible for energy coupling to the transport system. The polypeptide is Sulfate/thiosulfate import ATP-binding protein CysA (Escherichia coli (strain K12)).